Consider the following 456-residue polypeptide: Divalent metal cation transporter MntH (456 aa).

Helical transmembrane passes span 47–67, 77–97, 123–143, 151–171, 184–204, 227–247, 276–296, 316–336, 369–389, 392–412, and 422–442; these read ALSFFGPGYLVAVGYMDPGNW, FGYALLSVVLLSNLMAVLLQA, AWPLWLLAELAICATDLAEVI, LLFGIPLEIGVILTAVDVLLV, ALIITLLGVIALCFLTQIIMA, MLYIALGIIGATVMPHNLYLH, IALTFALVINASILILAAASF, PLLGSAIAPALFAIALLCCGL, FVAIVPAAIVTILYGSQGTTE, ILSQVVLSLQLPFAVIPLVIF, and LAAAPWVTFLAAITAAIIVVL.

Belongs to the NRAMP family.

The protein localises to the cell inner membrane. In terms of biological role, h(+)-stimulated, divalent metal cation uptake system. The protein is Divalent metal cation transporter MntH of Brucella suis biovar 1 (strain 1330).